The chain runs to 57 residues: Potassium channel toxin alpha-KTx 4.2 (57 aa).

The signal sequence occupies residues 1–20 (MKVLYGILIIFILCSMFYLS). Residues 21–22 (QE) constitute a propeptide, removed by a carboxypeptidase. Disulfide bonds link Cys29-Cys50, Cys35-Cys55, and Cys39-Cys57.

Belongs to the short scorpion toxin superfamily. Potassium channel inhibitor family. Alpha-KTx 04 subfamily. As to expression, expressed by the venom gland.

It localises to the secreted. Its function is as follows. Blocker for small-conductance calcium-activated potassium channels KCa2.2/KCNN2 (Kd=80 nM) and KCa2.3/KCNN3 (Kd=197 nM) and ERG1/Kv11.1/KCNH2 potassium channels (53% inhibition at 5 uM). Has also been shown to inhibit Kv1.1/KCNA1 and Nav1.7/SCN9A with a moderate potency, as well as Kv11.1/KCNH2/ERG1 and Kv1.2/KCNA2 with a low potency. The polypeptide is Potassium channel toxin alpha-KTx 4.2 (Tityus serrulatus (Brazilian scorpion)).